The following is an 874-amino-acid chain: Probable inorganic carbon transporter subunit DabA (874 aa).

Residues cysteine 398, aspartate 400, histidine 580, and cysteine 595 each contribute to the Zn(2+) site.

It belongs to the inorganic carbon transporter (TC 9.A.2) DabA family. Forms a complex with DabB. The cofactor is Zn(2+).

Its subcellular location is the cell membrane. Functionally, part of an energy-coupled inorganic carbon pump. This is Probable inorganic carbon transporter subunit DabA from Bacillus cereus (strain AH187).